A 402-amino-acid polypeptide reads, in one-letter code: LIM/homeobox protein Lhx5 (402 aa).

2 LIM zinc-binding domains span residues 3–61 (VHCA…RRFG) and 62–125 (TKCA…SSSL). Residues 124-148 (SLKEGSLNSVSSCTDRSLSPDLQDP) show a composition bias toward low complexity. Disordered stretches follow at residues 124-186 (SLKE…PRTT) and 298-402 (HGPP…AAVW). Basic and acidic residues predominate over residues 151-167 (DDPKETDNSTSSDKETA). Positions 180-239 (RRGPRTTIKAKQLETLKAAFAATPKPTRHIREQLAQETGLNMRVIQVWFQNRRSKERRMK) form a DNA-binding region, homeobox. Low complexity-rich tracts occupy residues 300–311 (PPSQAQSPADSS) and 322–336 (PLGALEPPLAGPHGA).

It is found in the nucleus. Its function is as follows. Plays an essential role in the regulation of neuronal differentiation and migration during development of the central nervous system. In Mus musculus (Mouse), this protein is LIM/homeobox protein Lhx5 (Lhx5).